Reading from the N-terminus, the 305-residue chain is Serine/threonine-protein phosphatase ppe1 (305 aa).

Positions 51, 53, 79, and 111 each coordinate Mn(2+). His112 acts as the Proton donor in catalysis. Mn(2+) is bound by residues His161 and His235.

The protein belongs to the PPP phosphatase family. PP-6 (PP-V) subfamily. As to quaternary structure, interacts with sts5, ekc1 and mis12. Requires Mn(2+) as cofactor.

The protein resides in the nucleus. The enzyme catalyses O-phospho-L-seryl-[protein] + H2O = L-seryl-[protein] + phosphate. It carries out the reaction O-phospho-L-threonyl-[protein] + H2O = L-threonyl-[protein] + phosphate. Functionally, has a role in chromosome segregation. May provide a dynamic connection between kinetochore microtubules and kinetochore chromatin. Negatively regulates mis12. The chain is Serine/threonine-protein phosphatase ppe1 (ppe1) from Schizosaccharomyces pombe (strain 972 / ATCC 24843) (Fission yeast).